The sequence spans 317 residues: Tyrosine--tRNA ligase (317 aa).

Tyr-32 lines the L-tyrosine pocket. Residues 37–45 carry the 'HIGH' region motif; it reads PSGEIHLGH. L-tyrosine-binding residues include Tyr-152, Gln-156, Asp-159, and Gln-174. The 'KMSKS' region motif lies at 208–212; the sequence is KMSSS. Ser-211 is a binding site for ATP.

This sequence belongs to the class-I aminoacyl-tRNA synthetase family. TyrS type 3 subfamily. Homodimer.

It localises to the cytoplasm. It catalyses the reaction tRNA(Tyr) + L-tyrosine + ATP = L-tyrosyl-tRNA(Tyr) + AMP + diphosphate + H(+). In terms of biological role, catalyzes the attachment of tyrosine to tRNA(Tyr) in a two-step reaction: tyrosine is first activated by ATP to form Tyr-AMP and then transferred to the acceptor end of tRNA(Tyr). This Methanocorpusculum labreanum (strain ATCC 43576 / DSM 4855 / Z) protein is Tyrosine--tRNA ligase.